Consider the following 563-residue polypeptide: Urocanate hydratase (563 aa).

Residues 53 to 54 (GG), Q131, 177 to 179 (GMG), E197, R202, 243 to 244 (NA), 264 to 268 (QTSAH), 274 to 275 (YL), and Y323 each bind NAD(+). The active site involves C411. Residue G493 coordinates NAD(+).

It belongs to the urocanase family. NAD(+) is required as a cofactor.

The protein resides in the cytoplasm. It catalyses the reaction 4-imidazolone-5-propanoate = trans-urocanate + H2O. It participates in amino-acid degradation; L-histidine degradation into L-glutamate; N-formimidoyl-L-glutamate from L-histidine: step 2/3. Functionally, catalyzes the conversion of urocanate to 4-imidazolone-5-propionate. The chain is Urocanate hydratase from Yersinia pestis bv. Antiqua (strain Antiqua).